The sequence spans 446 residues: Acyl-lipid (8-3)-desaturase (446 aa).

In terms of domain architecture, Cytochrome b5 heme-binding spans Gly6–Val82. His41 and His64 together coordinate heme. 2 helical membrane passes run Ala125 to Val145 and Leu150 to Leu170. The Histidine box-1 signature appears at His171–His175. A Histidine box-2 motif is present at residues His207–His212. Positions Gln387–His391 match the Histidine box-3 motif.

The protein belongs to the fatty acid desaturase type 1 family. Fe(2+) is required as a cofactor.

The protein resides in the membrane. The enzyme catalyses an (8Z,11Z,14Z)-icosatrienoyl-containing glycerolipid + 2 Fe(II)-[cytochrome b5] + O2 + 2 H(+) = (5Z,8Z,11Z,14Z)-eicosatetraenoyl-containing glycerolipid + 2 Fe(III)-[cytochrome b5] + 2 H2O. It carries out the reaction an (8Z,11Z,14Z,17Z)-eicosatetraenoyl-containing glycerolipid + 2 Fe(II)-[cytochrome b5] + O2 + 2 H(+) = a (5Z,8Z,11Z,14Z,17Z)-eicosapentaenoyl-containing glycerolipid + 2 Fe(III)-[cytochrome b5] + 2 H2O. Fatty acid desaturase that introduces a cis double bond at the 5-position in 20-carbon polyunsaturated fatty acids incorporated in a glycerolipid that contain a Delta(8) double bond. Involved in the conversion of di-homo-Delta-linolenic acid to arachidonic acid. Essential in the production of eicosanoids. In Mortierella alpina (Oleaginous fungus), this protein is Acyl-lipid (8-3)-desaturase (DES1).